The chain runs to 136 residues: Large ribosomal subunit protein uL16 (136 aa).

This sequence belongs to the universal ribosomal protein uL16 family. As to quaternary structure, part of the 50S ribosomal subunit.

In terms of biological role, binds 23S rRNA and is also seen to make contacts with the A and possibly P site tRNAs. The chain is Large ribosomal subunit protein uL16 from Psychromonas ingrahamii (strain DSM 17664 / CCUG 51855 / 37).